Consider the following 451-residue polypeptide: TERF1-interacting nuclear factor 2 (451 aa).

A2 carries the post-translational modification N-acetylalanine. The disordered stretch occupies residues 229-257 (NPLPKAKPGTHLPQGPSSRTHPEPLAGRH). The TBM motif lies at 256–278 (RHFNLAPLGRRRVQSQWASTRGG). The Nuclear localization signal signature appears at 262–268 (PLGRRRV). S295 carries the phosphoserine modification. Residues K302, K306, K341, and K353 each participate in a glycyl lysine isopeptide (Lys-Gly) (interchain with G-Cter in SUMO2) cross-link.

Monomer. Found in a complex with POT1; TERF1 and TNKS1. Component of the shelterin complex (telosome) composed of TERF1, TERF2, TINF2, TERF2IP ACD and POT1. Interacts with TERF1, TERF2 and ACD. Detected in heart, brain, placenta, lung, liver, skeletal muscle, kidney and pancreas.

It localises to the nucleus. Its subcellular location is the chromosome. The protein localises to the telomere. It is found in the nucleus matrix. Its function is as follows. Component of the shelterin complex (telosome) that is involved in the regulation of telomere length and protection. Shelterin associates with arrays of double-stranded TTAGGG repeats added by telomerase and protects chromosome ends; without its protective activity, telomeres are no longer hidden from the DNA damage surveillance and chromosome ends are inappropriately processed by DNA repair pathways. Plays a role in shelterin complex assembly. Isoform 1 may have additional role in tethering telomeres to the nuclear matrix. In Homo sapiens (Human), this protein is TERF1-interacting nuclear factor 2 (TINF2).